A 481-amino-acid chain; its full sequence is RAC-beta serine/threonine-protein kinase (481 aa).

The residue at position 1 (Met-1) is an N-acetylmethionine. Residues 5-108 (SVIKEGWLHK…WMRAIQMVAN (104 aa)) enclose the PH domain. The residue at position 34 (Ser-34) is a Phosphoserine. The cysteines at positions 60 and 77 are disulfide-linked. Ser-126 is subject to Phosphoserine. O-linked (GlcNAc) serine glycans are attached at residues Ser-128 and Ser-131. The 258-residue stretch at 152–409 (FDYLKLLGKG…AKEVMEHRFF (258 aa)) folds into the Protein kinase domain. Residues 158–166 (LGKGTFGKV) and Lys-181 contribute to the ATP site. Asp-275 acts as the Proton acceptor in catalysis. Residues Asn-280 and Asp-293 each contribute to the Mn(2+) site. A disulfide bridge links Cys-297 with Cys-311. Residue Thr-306 is glycosylated (O-linked (GlcNAc) threonine). At Thr-309 the chain carries Phosphothreonine; by PDPK1. The O-linked (GlcNAc) threonine glycan is linked to Thr-313. One can recognise an AGC-kinase C-terminal domain in the interval 410 to 481 (LSINWQDVVQ…QFSYSASIRE (72 aa)). Ser-447 carries the post-translational modification Phosphoserine. The residue at position 451 (Thr-451) is a Phosphothreonine. Phosphoserine; by MTOR occurs at positions 474 and 478. Ser-474 carries O-linked (GlcNAc) serine; alternate glycosylation.

This sequence belongs to the protein kinase superfamily. AGC Ser/Thr protein kinase family. RAC subfamily. In terms of assembly, interacts with BTBD10. Interacts with KCTD20. Interacts (via PH domain) with MTCP1, TCL1A and TCL1B; this interaction may facilitate AKT2 oligomerization and phosphorylation, hence increasing kinase activity. Interacts with PHB2; this interaction may be important for myogenic differentiation. Interacts (when phosphorylated) with CLIP3/ClipR-59; this interaction promotes cell membrane localization. Interacts with WDFY2 (via WD repeats 1-3). Post-translationally, phosphorylation on Thr-309 and Ser-474 is required for full activity. Phosphorylation of the activation loop at Thr-309 by PDPK1/PDK1 is a prerequisite for full activation. Phosphorylated and activated by PDPK1/PDK1 in the presence of phosphatidylinositol 3,4,5-trisphosphate. Phosphorylation by mTORC2 in response to growth factors plays a key role in AKT1 activation: mTORC2 phosphorylates different sites depending on the context, such as Ser-474 or Ser-478, thereby facilitating subsequent phosphorylation of the activation loop by PDPK1/PDK1. Ubiquitinated; undergoes both 'Lys-48'- and 'Lys-63'-linked polyubiquitination. TRAF6-induced 'Lys-63'-linked AKT2 ubiquitination. When fully phosphorylated and translocated into the nucleus, undergoes 'Lys-48'-polyubiquitination catalyzed by TTC3, leading to its degradation by the proteasome. In terms of processing, O-GlcNAcylation at Thr-306 and Thr-313 inhibits activating phosphorylation at Thr-309 via disrupting the interaction between AKT and PDPK1/PDK1.

It is found in the cytoplasm. It localises to the nucleus. Its subcellular location is the cell membrane. The protein localises to the early endosome. The enzyme catalyses L-seryl-[protein] + ATP = O-phospho-L-seryl-[protein] + ADP + H(+). It carries out the reaction L-threonyl-[protein] + ATP = O-phospho-L-threonyl-[protein] + ADP + H(+). Two specific sites, one in the kinase domain (Thr-309) and the other in the C-terminal regulatory region (Ser-474), need to be phosphorylated for its full activation. AKT2 phosphorylation of PKP1 is induced by insulin. Inhibited by Akt inhibitor MK2206. Its function is as follows. AKT2 is one of 3 closely related serine/threonine-protein kinases (AKT1, AKT2 and AKT3) called the AKT kinases, and which regulate many processes including metabolism, proliferation, cell survival, growth and angiogenesis. This is mediated through serine and/or threonine phosphorylation of a range of downstream substrates. Over 100 substrate candidates have been reported so far, but for most of them, no isoform specificity has been reported. AKT is responsible of the regulation of glucose uptake by mediating insulin-induced translocation of the SLC2A4/GLUT4 glucose transporter to the cell surface. Phosphorylation of PTPN1 at 'Ser-50' negatively modulates its phosphatase activity preventing dephosphorylation of the insulin receptor and the attenuation of insulin signaling. Phosphorylation of TBC1D4 triggers the binding of this effector to inhibitory 14-3-3 proteins, which is required for insulin-stimulated glucose transport. AKT also regulates the storage of glucose in the form of glycogen by phosphorylating GSK3A at 'Ser-21' and GSK3B at 'Ser-9', resulting in inhibition of its kinase activity. Phosphorylation of GSK3 isoforms by AKT is also thought to be one mechanism by which cell proliferation is driven. AKT also regulates cell survival via the phosphorylation of MAP3K5 (apoptosis signal-related kinase). Phosphorylation of 'Ser-83' decreases MAP3K5 kinase activity stimulated by oxidative stress and thereby prevents apoptosis. AKT mediates insulin-stimulated protein synthesis by phosphorylating TSC2 at 'Ser-939' and 'Thr-1462', thereby activating mTORC1 signaling and leading to both phosphorylation of 4E-BP1 and in activation of RPS6KB1. AKT is involved in the phosphorylation of members of the FOXO factors (Forkhead family of transcription factors), leading to binding of 14-3-3 proteins and cytoplasmic localization. In particular, FOXO1 is phosphorylated at 'Thr-24', 'Ser-256' and 'Ser-319'. FOXO3 and FOXO4 are phosphorylated on equivalent sites. AKT has an important role in the regulation of NF-kappa-B-dependent gene transcription and positively regulates the activity of CREB1 (cyclic AMP (cAMP)-response element binding protein). The phosphorylation of CREB1 induces the binding of accessory proteins that are necessary for the transcription of pro-survival genes such as BCL2 and MCL1. AKT phosphorylates 'Ser-454' on ATP citrate lyase (ACLY), thereby potentially regulating ACLY activity and fatty acid synthesis. Activates the 3B isoform of cyclic nucleotide phosphodiesterase (PDE3B) via phosphorylation of 'Ser-273', resulting in reduced cyclic AMP levels and inhibition of lipolysis. Phosphorylates PIKFYVE on 'Ser-318', which results in increased PI(3)P-5 activity. The Rho GTPase-activating protein DLC1 is another substrate and its phosphorylation is implicated in the regulation cell proliferation and cell growth. AKT plays a role as key modulator of the AKT-mTOR signaling pathway controlling the tempo of the process of newborn neurons integration during adult neurogenesis, including correct neuron positioning, dendritic development and synapse formation. Signals downstream of phosphatidylinositol 3-kinase (PI(3)K) to mediate the effects of various growth factors such as platelet-derived growth factor (PDGF), epidermal growth factor (EGF), insulin and insulin-like growth factor I (IGF-I). AKT mediates the antiapoptotic effects of IGF-I. Essential for the SPATA13-mediated regulation of cell migration and adhesion assembly and disassembly. May be involved in the regulation of the placental development. In response to lysophosphatidic acid stimulation, inhibits the ciliogenesis cascade. In this context, phosphorylates WDR44, hence stabilizing its interaction with Rab11 and preventing the formation of the ciliogenic Rab11-FIP3-RAB3IP complex. Also phosphorylates RAB3IP/Rabin8, thus may affect RAB3IP guanine nucleotide exchange factor (GEF) activity toward Rab8, which is important for cilia growth. Phosphorylates PKP1, facilitating its interaction with YWHAG and translocation to the nucleus, ultimately resulting in a reduction in keratinocyte intercellular adhesion. Phosphorylation of PKP1 increases PKP1 protein stability, translocation to the cytoplasm away from desmosome plaques and PKP1-driven cap-dependent translation. Functionally, several AKT2-specific substrates have been identified, including ANKRD2, C2CD5, CLK2 and PITX2. May play a role in myoblast differentiation. In this context, may act through PITX2 phosphorylation. Unphosphorylated PITX2 associates with an ELAVL1/HuR-containing complex, which stabilizes cyclin mRNA and ensuring cell proliferation. Phosphorylation by AKT2 impairs this association, leading to CCND1 mRNA destabilization and progression towards differentiation. Also involved in the negative regulation of myogenesis in response to stress conditions. In this context, acts by phosphorylating ANKRD2. May also be a key regulator of glucose uptake. Regulates insulin-stimulated glucose transport by the increase of glucose transporter GLUT4 translocation from intracellular stores to the plasma membrane. In this context, acts by phosphorylating C2CD5/CDP138 on 'Ser-197' in insulin-stimulated adipocytes. Through the phosphorylation of CLK2 on 'Thr-343', involved in insulin-regulated suppression of hepatic gluconeogenesis. This Mus musculus (Mouse) protein is RAC-beta serine/threonine-protein kinase (Akt2).